The chain runs to 302 residues: Tritrans,polycis-undecaprenyl-diphosphate synthase (geranylgeranyl-diphosphate specific) (302 aa).

D33 is an active-site residue. Mg(2+) is bound at residue D33. Residues 34-37 (GNRR) and 78-80 (STE) each bind substrate. N81 acts as the Proton acceptor in catalysis. Residues F82, R84, R203, and 209–211 (RTS) contribute to the substrate site.

Belongs to the UPP synthase family. As to quaternary structure, homodimer. It depends on Mg(2+) as a cofactor.

It carries out the reaction geranylgeranyl diphosphate + 7 isopentenyl diphosphate = tri-trans,hepta-cis-undecaprenyl diphosphate + 7 diphosphate. In terms of biological role, catalyzes the sequential condensation of isopentenyl diphosphate (IPP) with geranylgeranyl diphosphate (GGPP) to yield (2Z,6Z,10Z,14Z,18Z,22Z,26Z,30E,34E,38E)-undecaprenyl diphosphate (tritrans,heptacis-UPP). It is probably the precursor of glycosyl carrier lipids. This chain is Tritrans,polycis-undecaprenyl-diphosphate synthase (geranylgeranyl-diphosphate specific), found in Halobacterium salinarum (strain ATCC 700922 / JCM 11081 / NRC-1) (Halobacterium halobium).